The chain runs to 21 residues: Endo-1,4-beta-xylanase A (21 aa).

It belongs to the glycosyl hydrolase 10 (cellulase F) family.

It catalyses the reaction Endohydrolysis of (1-&gt;4)-beta-D-xylosidic linkages in xylans.. The protein operates within glycan degradation; xylan degradation. The polypeptide is Endo-1,4-beta-xylanase A (Dictyoglomus sp. (strain B4A)).